Here is a 142-residue protein sequence, read N- to C-terminus: ATP synthase epsilon chain (142 aa).

This sequence belongs to the ATPase epsilon chain family. As to quaternary structure, F-type ATPases have 2 components, CF(1) - the catalytic core - and CF(0) - the membrane proton channel. CF(1) has five subunits: alpha(3), beta(3), gamma(1), delta(1), epsilon(1). CF(0) has three main subunits: a, b and c.

Its subcellular location is the cell inner membrane. In terms of biological role, produces ATP from ADP in the presence of a proton gradient across the membrane. The chain is ATP synthase epsilon chain from Pasteurella multocida (strain Pm70).